We begin with the raw amino-acid sequence, 382 residues long: uncharacterized protein (382 aa).

The next 12 membrane-spanning stretches (helical) occupy residues Gly-14 to Ala-34, Val-45 to Ile-65, Phe-79 to Ala-99, Phe-102 to Ser-122, Leu-131 to Ser-151, Leu-157 to Phe-177, Leu-204 to Pro-224, Ala-235 to Ile-255, Val-270 to Pro-290, Ala-291 to Cys-311, Ala-325 to Met-345, and Phe-348 to Leu-368.

Belongs to the major facilitator superfamily. YcaD (TC 2.A.1.26) family.

It is found in the cell inner membrane. This is an uncharacterized protein from Shigella flexneri serotype 5b (strain 8401).